The chain runs to 441 residues: Cysteine--tRNA ligase (441 aa).

A Zn(2+)-binding site is contributed by Cys24. The short motif at 26–36 (PTIYDYIHIGN) is the 'HIGH' region element. Positions 204, 230, and 234 each coordinate Zn(2+). Positions 262–266 (KMSKS) match the 'KMSKS' region motif. An ATP-binding site is contributed by Lys265.

This sequence belongs to the class-I aminoacyl-tRNA synthetase family. In terms of assembly, monomer. The cofactor is Zn(2+).

Its subcellular location is the cytoplasm. It catalyses the reaction tRNA(Cys) + L-cysteine + ATP = L-cysteinyl-tRNA(Cys) + AMP + diphosphate. The polypeptide is Cysteine--tRNA ligase (Mesoplasma florum (strain ATCC 33453 / NBRC 100688 / NCTC 11704 / L1) (Acholeplasma florum)).